Here is a 202-residue protein sequence, read N- to C-terminus: MRRKNGFSVASVFILCSIAQMTCEEFELENTESLVECVQCVQLWRSASAKEGKVCTSGATTCKGNACFMRQCKHCPVYQYMSGCVNFSPWQLADLEMNRRTSELRMRRVGAVLLCEDTFNQTTCVCNRRDKCNDIHSRLPFATYAEGLFRGVVNFDTIIAAIDPRYLEVMSGYHFRFLASSSSSFSSFLPSIAIILFFVLSH.

Residues 1 to 19 form the signal peptide; it reads MRRKNGFSVASVFILCSIA. A helical membrane pass occupies residues 177–199; sequence FLASSSSSFSSFLPSIAIILFFV.

The protein resides in the membrane. This is an uncharacterized protein from Caenorhabditis elegans.